Here is a 2089-residue protein sequence, read N- to C-terminus: MTLPNNVVLFGDQTVDPCPIIKQLYRQSRDSLTLQTLFRQSYDAVRREIATSEASDRALFPSFDSFQDLAEKQNERHNEAVSTVLLCIAQLGLLMIHVDQDDSTFDARPSRTYLVGLCTGMLPAAALAASSSTSQLLRLAPEIVLVALRLGLEANRRSAQIEASTESWASVVPGMAPQEQQEALAQFNDEFMIPTSKQAYISAESDSSATLSGPPSTLLSLFSSSDIFKKARRIKLPITAAFHAPHLRVPDVEKILGSLSHSDEYPLRNDVVIVSTRSGKPITAQSLGDALQHIIMDILREPMRWSRVVEEMINGLKDQGAILTSAGPVRAADSLRQRMASAGIEVSRSTEMQPRQEQRTKPRSSDIAIIGYAARLPESETLEEVWKILEDGRDVHKKIPSDRFDVDTHCDPSGKIKNTSYTPYGCFLDRPGFFDARLFNMSPREASQTDPAQRLLLLTTYEALEMAGYTPDGTPSTAGDRIGTFFGQTLDDYREANASQNIEMYYVSGGIRAFGPGRLNYHFKWEGPSYCVDAACSSSTLSIQMAMSSLRAHECDTAVAGGTNVLTGVDMFSGLSRGSFLSPTGSCKTFDNDADGYCRGDGVGSVILKRLDDAIADGDNIQAVIKSAATNHSAHAVSITHPHAGAQQNLMRQVLREGDVEPADIDYVEMHGTGTQAGDATEFASVTNVITGRTRDNPLHVGAVKANFGHAEAAAGTNSLVKVLMMMRKNAIPPHIGIKGRINEKFPPLDKINVRINRTMTPFVARAGGDGKRRVLLNNFNATGGNTSLLIEDAPKTDIQGHDLRSAHVVAISAKTPYSFRQNTQRLLEYLQLNPETQLQDLSYTTTARRMHHVIRKAYAVQSIEQLVQSLKKDISSSSEPGATTEHSSAVFLFTGQGSQYLGMGRQLYQTNKAFRKSISESDSICIRQGLPSFEWIVSAEPSEERITSPSESQLALVAIALALASLWQSWGITPKAVMGHSLGEYAALCVAGVLSISDTLYLVGKRAQMMEKKCIANTHSMLAIQSDSESIQQIISGGQMPSCEIACLNGPSNTVVSGSLTDIHSLEEKLNAMGTKTTLLKLPFAFHSVQMDPILEDIRALAQNVQFRKPIVPIASTLLGTLVKDHGIITADYLTRQARQAVRFQEALQACRAENIATDDTLWVEVGAHPLCHGMVRSTLGLSPTKALPSLKRDEDCWSTISRSIANAYNSGVKVSWIDYHRDFQGALRLLELPSYAFDLKNYWIQHEGDWSLRKGETTRTTAPPPQASFSTTCLQVIENETFTQDSASVTFSSQLSEPKLNTAVRGHLVSGTGLCPSSVYADVAFTAAWYIASRMTPSDPVPAMDLSSMEVFRPLIVDSNETSQLLRVSATRNPNEQIVNIKISSQDDKGRQEHAHCTVMYGDGHQWMEEWQRNAYLIQSRIDKLTQPSSPGIHRMLKEMIYKQFQTVVTYSPEYHNIDEIFMDCDLNETAANIKLQSTAGHGEFIYSPYWIDTVAHLAGFILNANVKTPADTVFISHGWQSFQIAAPLSAEKTYRGYVRMQPSSGRGVMAGDVYIFDGDEIVVVCKGIKFQQMKRTTLQSLLGVSPAATPTSKSIAAKSTRPQLVTVRKAAVTQSPVAGFSKVLDTIASEVGVDVSELSDDVKISDVGVDSLLTISILGRLRPETGLDLSSSLFIEHPTIAELRAFFLDKMDMPQATANDDDSDDSSDDEGPGFSRSQSNSTISTPEEPDVVNVLMSIIAREVGIQESEIQLSTPFAEIGVDSLLTISILDALKTEIGMNLSANFFHDHPTFADVQKALGAAPTPQKPLDLPLARLEQSPRPSSQALRAKSVLLQGRPEKGKPALFLLPDGAGSLFSYISLPSLPSGLPIYGLDSPFHNNPSEFTISFSDVATIYIAAIRAIQPKGPYMLGGWSLGGIHAYETARQLIEQGETISNLIMIDSPCPGTLPPLPAPTLSLLEKAGIFDGLSTSGAPITERTRLHFLGCVRALENYTVTPLPPGKSPGKVTVIWAQDGVLEGREEQGKEYMAATSSGDLNKDMDKAKEWLTGKRTSFGPSGWDKLTGTEVHCHVVGGNHFSIMFPPKVC.

The N-terminal acylcarrier protein transacylase (SAT) domain (SAT) stretch occupies residues 8–243 (VLFGDQTVDP…IKLPITAAFH (236 aa)). The disordered stretch occupies residues 342–364 (AGIEVSRSTEMQPRQEQRTKPRS). Basic and acidic residues predominate over residues 354–364 (PRQEQRTKPRS). The Ketosynthase family 3 (KS3) domain occupies 364–793 (SSDIAIIGYA…GGNTSLLIED (430 aa)). Catalysis depends on for beta-ketoacyl synthase activity residues cysteine 536, histidine 671, and histidine 710. The tract at residues 891–1214 (VFLFTGQGSQ…SIANAYNSGV (324 aa)) is malonyl-CoA:ACP transacylase (MAT) domain. The interval 1273–1586 (TTCLQVIENE…KRTTLQSLLG (314 aa)) is product template (PT) domain. The segment at 1276 to 1408 (LQVIENETFT…CTVMYGDGHQ (133 aa)) is N-terminal hotdog fold. In terms of domain architecture, PKS/mFAS DH spans 1276–1582 (LQVIENETFT…FQQMKRTTLQ (307 aa)). Histidine 1309 (proton acceptor; for dehydratase activity) is an active-site residue. The interval 1435–1582 (IHRMLKEMIY…FQQMKRTTLQ (148 aa)) is C-terminal hotdog fold. The active-site Proton donor; for dehydratase activity is the aspartate 1495. The Carrier 1 domain maps to 1617–1694 (QSPVAGFSKV…ELRAFFLDKM (78 aa)). Serine 1654 bears the O-(pantetheine 4'-phosphoryl)serine mark. Residues 1697 to 1730 (PQATANDDDSDDSSDDEGPGFSRSQSNSTISTPE) form a disordered region. Residues 1702-1714 (NDDDSDDSSDDEG) show a composition bias toward acidic residues. The segment covering 1718–1728 (SRSQSNSTIST) has biased composition (polar residues). Positions 1729 to 1806 (PEEPDVVNVL…DVQKALGAAP (78 aa)) constitute a Carrier 2 domain. Serine 1766 carries the post-translational modification O-(pantetheine 4'-phosphoryl)serine. The tract at residues 1848 to 2083 (LFLLPDGAGS…VVGGNHFSIM (236 aa)) is thioesterase (TE) domain.

Its pathway is secondary metabolite biosynthesis. In terms of biological role, non-reducing polyketide synthase; part of the gene cluster that mediates the biosynthesis of orcinol depsidone grayanic acid (GRA), the only major secondary metabolite known in C.grayi. The first step consists in the ring and depside synthesis by PKS16 leading to 4-O-demethylsphaerophorin, involving different orcinol-like rings, one with acetyl CoA and the other with octanoyl CoA as the starter. Further depsidone formation by the GRA cluster-specific cytochrome P450 leads to 4-O-demethylgrayanic acid. Finally, the cluster specific O-methyltransferase probably converts the 4-O-demethylgrayanic acid into grayanic acid. This is Non-reducing polyketide synthase PKS16 from Cladonia grayi (Gray's cup lichen).